We begin with the raw amino-acid sequence, 160 residues long: Iron-sulfur assembly protein IscA1 (160 aa).

Belongs to the HesB/IscA family. As to quaternary structure, tetramer.

The protein resides in the mitochondrion. It functions in the pathway cofactor biosynthesis; iron-sulfur cluster biosynthesis. In terms of biological role, participates in iron-sulfur cluster formation (ISC) pathway for iron-sulfur (Fe-S) cluster biogenesis. Can bind iron and [4Fe-4S] clusters. May function as an iron chaperone. The polypeptide is Iron-sulfur assembly protein IscA1 (Plasmodium falciparum (isolate 3D7)).